The primary structure comprises 236 residues: GLIPR1-like protein 1 (236 aa).

The first 27 residues, 1–27 (MALKKKLNFLWTLVLYLIASRLPKAFG), serve as a signal peptide directing secretion. The SCP domain maps to 46 to 178 (LNIHNELRRK…FSAGLFVCNY (133 aa)). N-linked (GlcNAc...) asparagine glycosylation is present at Asn-126.

It belongs to the CRISP family. As to quaternary structure, part of a oolemmal binding multimeric complex (IZUMO1 complex) composed at least of IZUMO1 and GLIPR1L1; the complex assemblage is influenced by the maturation status of the male germ cell. Interacts with IZUMO1. In terms of processing, N-glycosylated. N-glycosylation decreases during the transit in the caput. In terms of tissue distribution, expressed in testis (at protein level). Little or no expression in other tissues tested.

The protein localises to the cytoplasmic vesicle. Its subcellular location is the secretory vesicle. It localises to the acrosome. The protein resides in the cell membrane. It is found in the membrane raft. The protein localises to the secreted. Functionally, required for optimal fertilization at the stage of sperm-oocyte fusion, plays a role in optimizing acrosome function, the translocation of IZUMO1 during the acrosome reaction and the fertilization process. Component of epididymosomes, one type of membranous microvesicules which mediate the transfer of lipids and proteins to spermatozoa plasma membrane during epididymal maturation. Also component of the CD9-positive microvesicules found in the cauda region. The protein is GLIPR1-like protein 1 of Mus musculus (Mouse).